We begin with the raw amino-acid sequence, 489 residues long: Mitochondrial-processing peptidase subunit beta (489 aa).

Residues 1–45 (MAAAAVSRTLLPVAGRRLWGFTRRLPLRAAAAQPLYFGGDRLRST) constitute a mitochondrion transit peptide. Position 101 (His-101) interacts with Zn(2+). Glu-104 (proton acceptor) is an active-site residue. Residues His-105 and Glu-181 each coordinate Zn(2+).

This sequence belongs to the peptidase M16 family. As to quaternary structure, heterodimer of PMPCA (alpha) and PMPCB (beta) subunits, forming the mitochondrial processing protease (MPP) in which PMPCA is involved in substrate recognition and binding and PMPCB is the catalytic subunit. Zn(2+) serves as cofactor.

Its subcellular location is the mitochondrion matrix. It carries out the reaction Release of N-terminal transit peptides from precursor proteins imported into the mitochondrion, typically with Arg in position P2.. Its activity is regulated as follows. Binding to PMPCA is required for catalytic activity. Its function is as follows. Catalytic subunit of the essential mitochondrial processing protease (MPP), which cleaves the mitochondrial sequence off newly imported precursors proteins. Preferentially, cleaves after an arginine at position P2. Required for PINK1 turnover by coupling PINK1 mitochondrial import and cleavage, which results in subsequent PINK1 proteolysis. This Rattus norvegicus (Rat) protein is Mitochondrial-processing peptidase subunit beta (Pmpcb).